Reading from the N-terminus, the 555-residue chain is Arginine--tRNA ligase (555 aa).

A 'HIGH' region motif is present at residues 117–127 (ANPNGPLHVGH).

It belongs to the class-I aminoacyl-tRNA synthetase family.

It localises to the cytoplasm. The catalysed reaction is tRNA(Arg) + L-arginine + ATP = L-arginyl-tRNA(Arg) + AMP + diphosphate. In Methanospirillum hungatei JF-1 (strain ATCC 27890 / DSM 864 / NBRC 100397 / JF-1), this protein is Arginine--tRNA ligase.